A 416-amino-acid chain; its full sequence is Glutamyl-tRNA reductase (416 aa).

Substrate contacts are provided by residues 49 to 52, serine 105, 110 to 112, and glutamine 116; these read TCNR and EPQ. Cysteine 50 acts as the Nucleophile in catalysis. An NADP(+)-binding site is contributed by 185-190; the sequence is GAGETI.

This sequence belongs to the glutamyl-tRNA reductase family. As to quaternary structure, homodimer.

The enzyme catalyses (S)-4-amino-5-oxopentanoate + tRNA(Glu) + NADP(+) = L-glutamyl-tRNA(Glu) + NADPH + H(+). It functions in the pathway porphyrin-containing compound metabolism; protoporphyrin-IX biosynthesis; 5-aminolevulinate from L-glutamyl-tRNA(Glu): step 1/2. Its function is as follows. Catalyzes the NADPH-dependent reduction of glutamyl-tRNA(Glu) to glutamate 1-semialdehyde (GSA). The chain is Glutamyl-tRNA reductase from Shewanella denitrificans (strain OS217 / ATCC BAA-1090 / DSM 15013).